A 522-amino-acid chain; its full sequence is Maturase K (522 aa).

This sequence belongs to the intron maturase 2 family. MatK subfamily.

It is found in the plastid. The protein resides in the chloroplast. In terms of biological role, usually encoded in the trnK tRNA gene intron. Probably assists in splicing its own and other chloroplast group II introns. The polypeptide is Maturase K (Iris danfordiae (Danford iris)).